The following is a 302-amino-acid chain: Sulfate adenylyltransferase subunit 2 (302 aa).

Positions 280 to 302 (RQGRLIDSDQSASMEQKKRQGYF) are disordered.

This sequence belongs to the PAPS reductase family. CysD subfamily. As to quaternary structure, heterodimer composed of CysD, the smaller subunit, and CysN.

The catalysed reaction is sulfate + ATP + H(+) = adenosine 5'-phosphosulfate + diphosphate. Its pathway is sulfur metabolism; hydrogen sulfide biosynthesis; sulfite from sulfate: step 1/3. Its function is as follows. With CysN forms the ATP sulfurylase (ATPS) that catalyzes the adenylation of sulfate producing adenosine 5'-phosphosulfate (APS) and diphosphate, the first enzymatic step in sulfur assimilation pathway. APS synthesis involves the formation of a high-energy phosphoric-sulfuric acid anhydride bond driven by GTP hydrolysis by CysN coupled to ATP hydrolysis by CysD. The sequence is that of Sulfate adenylyltransferase subunit 2 from Shewanella baltica (strain OS185).